The chain runs to 121 residues: Large ribosomal subunit protein eL18 (121 aa).

The protein belongs to the eukaryotic ribosomal protein eL18 family.

The protein is Large ribosomal subunit protein eL18 of Methanothermobacter thermautotrophicus (strain ATCC 29096 / DSM 1053 / JCM 10044 / NBRC 100330 / Delta H) (Methanobacterium thermoautotrophicum).